We begin with the raw amino-acid sequence, 99 residues long: UPF0320 protein YER188C-A (99 aa).

The protein belongs to the UPF0320 family.

This is UPF0320 protein YER188C-A from Saccharomyces cerevisiae (strain ATCC 204508 / S288c) (Baker's yeast).